The sequence spans 237 residues: Phosphoribosylaminoimidazole-succinocarboxamide synthase (237 aa).

It belongs to the SAICAR synthetase family.

It catalyses the reaction 5-amino-1-(5-phospho-D-ribosyl)imidazole-4-carboxylate + L-aspartate + ATP = (2S)-2-[5-amino-1-(5-phospho-beta-D-ribosyl)imidazole-4-carboxamido]succinate + ADP + phosphate + 2 H(+). Its pathway is purine metabolism; IMP biosynthesis via de novo pathway; 5-amino-1-(5-phospho-D-ribosyl)imidazole-4-carboxamide from 5-amino-1-(5-phospho-D-ribosyl)imidazole-4-carboxylate: step 1/2. The sequence is that of Phosphoribosylaminoimidazole-succinocarboxamide synthase from Listeria innocua serovar 6a (strain ATCC BAA-680 / CLIP 11262).